Here is a 924-residue protein sequence, read N- to C-terminus: Isoleucine--tRNA ligase (924 aa).

The short motif at 57 to 67 is the 'HIGH' region element; it reads PYANGDIHMGH. L-isoleucyl-5'-AMP is bound at residue Glu552. Residues 593 to 597 carry the 'KMSKS' region motif; that stretch reads KMSKS. Lys596 is an ATP binding site. Cys891, Cys894, Cys911, and Cys914 together coordinate Zn(2+).

This sequence belongs to the class-I aminoacyl-tRNA synthetase family. IleS type 1 subfamily. As to quaternary structure, monomer. It depends on Zn(2+) as a cofactor.

It is found in the cytoplasm. It catalyses the reaction tRNA(Ile) + L-isoleucine + ATP = L-isoleucyl-tRNA(Ile) + AMP + diphosphate. Catalyzes the attachment of isoleucine to tRNA(Ile). As IleRS can inadvertently accommodate and process structurally similar amino acids such as valine, to avoid such errors it has two additional distinct tRNA(Ile)-dependent editing activities. One activity is designated as 'pretransfer' editing and involves the hydrolysis of activated Val-AMP. The other activity is designated 'posttransfer' editing and involves deacylation of mischarged Val-tRNA(Ile). The chain is Isoleucine--tRNA ligase from Geobacillus kaustophilus (strain HTA426).